A 121-amino-acid chain; its full sequence is Large ribosomal subunit protein uL22 (121 aa).

This sequence belongs to the universal ribosomal protein uL22 family. As to quaternary structure, part of the 50S ribosomal subunit.

This protein binds specifically to 23S rRNA; its binding is stimulated by other ribosomal proteins, e.g. L4, L17, and L20. It is important during the early stages of 50S assembly. It makes multiple contacts with different domains of the 23S rRNA in the assembled 50S subunit and ribosome. Functionally, the globular domain of the protein is located near the polypeptide exit tunnel on the outside of the subunit, while an extended beta-hairpin is found that lines the wall of the exit tunnel in the center of the 70S ribosome. This chain is Large ribosomal subunit protein uL22, found in Synechococcus sp. (strain CC9902).